The sequence spans 94 residues: C-C motif chemokine 17 (94 aa).

The first 23 residues, 1-23 (MAPLKMLALVTLLLGASLQHIHA), serve as a signal peptide directing secretion. Intrachain disulfides connect cysteine 33–cysteine 57 and cysteine 34–cysteine 73.

This sequence belongs to the intercrine beta (chemokine CC) family. In terms of tissue distribution, constitutively expressed in thymus. Detected at lower levels in the lung, colon and small intestine. Expressed in stimulated peripheral blood mononuclear cells, but not in resting cells.

It is found in the secreted. In terms of biological role, chemokine, which displays chemotactic activity for T lymphocytes, preferentially Th2 cells, but not monocytes or granulocytes. Therefore plays an important role in a wide range of inflammatory and immunological processes. Acts by binding to CCR4 at T-cell surface. Mediates GM-CSF/CSF2-driven pain and inflammation. In the brain, required to maintain the typical, highly branched morphology of hippocampal microglia under homeostatic conditions. May be important for the appropriate adaptation of microglial morphology and synaptic plasticity to acute lipopolysaccharide (LPS)-induced neuroinflammation. Plays a role in wound healing, mainly by inducing fibroblast migration into the wound. The chain is C-C motif chemokine 17 (CCL17) from Homo sapiens (Human).